A 270-amino-acid polypeptide reads, in one-letter code: MDLSADHILVVFLLTTLAGLATGIGGFIAFFMKRTDTKALTFALGLSGGVMVYISLVELLGEAQHRLMEFEGHTAGSWIAIASFFGGIAVAALIDYLVPEDENPHEARGPEDIHGQASGEFSSSRIKRSGILFALAIGIHNFPEGIATFAAGLDSLTLGTSIALAVAVHNIPEGIAVAVPLYYGTGSRKKALFYSFLSGLAEPVGAAIAMFFLFHFLTPTVLAVLFASVAGIMVFISFDELLPMAERWGHHHISIMGIIAGMLLMAIVLI.

Transmembrane regions (helical) follow at residues 8-28 (ILVVFLLTTLAGLATGIGGFI), 40-60 (LTFALGLSGGVMVYISLVELL), 78-98 (WIAIASFFGGIAVAALIDYLV), 131-151 (ILFALAIGIHNFPEGIATFAA), 162-182 (IALAVAVHNIPEGIAVAVPLY), 192-212 (LFYSFLSGLAEPVGAAIAMFF), 216-236 (FLTPTVLAVLFASVAGIMVFI), and 250-270 (HHHISIMGIIAGMLLMAIVLI). The Fe(2+) site is built by Asn-141 and Glu-144. 2 residues coordinate Zn(2+): Glu-144 and His-169. Positions 170, 173, and 202 each coordinate Fe(2+). Glu-173 lines the Zn(2+) pocket.

Belongs to the ZIP transporter (TC 2.A.5) family. ZupT subfamily.

It localises to the cell membrane. The catalysed reaction is Zn(2+)(in) = Zn(2+)(out). Functionally, mediates zinc uptake. May also transport other divalent cations. In Akkermansia muciniphila (strain ATCC BAA-835 / DSM 22959 / JCM 33894 / BCRC 81048 / CCUG 64013 / CIP 107961 / Muc), this protein is Zinc transporter ZupT.